Consider the following 446-residue polypeptide: MGLDTLSNSLKDAMKKLAGKTVIDRAAVDELVRDLQRALLSSDVNVKLVMELSKQIKARSLDEDLPKGINAREHVLRIVYQELVNLVGKEAEFSLKPQKILMAGLQGSGKTTTTGKLCRYFQRKGLKVGAIGADNFRPGAYAQLETLCKKINVPSYGDPKEKDAVKIVKDGLAALKDVDVIIVDTAGRHALEDDLIDEITQVNAYLNPDHRWLVIDAALGQAARDQAKRFHEAIGIDGVIVTKMDGTAKGGGAMSAVAETQSGIVFIGNGETIDDLERFDPNGFISRLLGMGDLKALVEKAEESMNAEDVDVNAMLRGKFTLNDMYKQLEAVQKMGPLKQVLSMLPMGNMNVPSDALEGTADKMKKFRIIMDSMTPQELDEPALINTSRMIRVAKGSGSSVEEVRDLIKYYKMMQKTLKGFRGNRMAMGKMMKQMQKGGMGPMGPM.

GTP-binding positions include 104-111 (GLQGSGKT), 184-188 (DTAGR), and 242-245 (TKMD).

This sequence belongs to the GTP-binding SRP family. SRP54 subfamily. In terms of assembly, part of the signal recognition particle protein translocation system, which is composed of SRP and FtsY. Archaeal SRP consists of a 7S RNA molecule of 300 nucleotides and two protein subunits: SRP54 and SRP19.

It is found in the cytoplasm. The catalysed reaction is GTP + H2O = GDP + phosphate + H(+). Functionally, involved in targeting and insertion of nascent membrane proteins into the cytoplasmic membrane. Binds to the hydrophobic signal sequence of the ribosome-nascent chain (RNC) as it emerges from the ribosomes. The SRP-RNC complex is then targeted to the cytoplasmic membrane where it interacts with the SRP receptor FtsY. The chain is Signal recognition particle 54 kDa protein from Methanocorpusculum labreanum (strain ATCC 43576 / DSM 4855 / Z).